The primary structure comprises 312 residues: Methionyl-tRNA formyltransferase (312 aa).

110-113 contacts (6S)-5,6,7,8-tetrahydrofolate; the sequence is SLLP.

It belongs to the Fmt family.

It carries out the reaction L-methionyl-tRNA(fMet) + (6R)-10-formyltetrahydrofolate = N-formyl-L-methionyl-tRNA(fMet) + (6S)-5,6,7,8-tetrahydrofolate + H(+). Its function is as follows. Attaches a formyl group to the free amino group of methionyl-tRNA(fMet). The formyl group appears to play a dual role in the initiator identity of N-formylmethionyl-tRNA by promoting its recognition by IF2 and preventing the misappropriation of this tRNA by the elongation apparatus. The protein is Methionyl-tRNA formyltransferase of Koribacter versatilis (strain Ellin345).